The following is a 284-amino-acid chain: Tropomyosin beta chain (284 aa).

N-acetylmethionine is present on Met1. A coiled-coil region spans residues Met1–Leu284. Composition is skewed to basic and acidic residues over residues Ala22–Glu40 and Lys51–Glu66. Residues Ala22–Glu66 are disordered.

The protein belongs to the tropomyosin family. In terms of assembly, homodimer. Heterodimer of an alpha (TPM1, TPM3 or TPM4) and a beta (TPM2) chain.

Its subcellular location is the cytoplasm. It is found in the cytoskeleton. Functionally, binds to actin filaments in muscle and non-muscle cells. Plays a central role, in association with the troponin complex, in the calcium dependent regulation of vertebrate striated muscle contraction. Smooth muscle contraction is regulated by interaction with caldesmon. In non-muscle cells is implicated in stabilizing cytoskeleton actin filaments. This Gallus gallus (Chicken) protein is Tropomyosin beta chain (TPM2).